The chain runs to 552 residues: Chromosomal replication initiator protein DnaA (552 aa).

The interval 1–90 (MWNETWNEIT…FTVAVTVDPT (90 aa)) is domain I, interacts with DnaA modulators. Positions 90 to 210 (TLDVIQDLPH…KPAHDPDRNG (121 aa)) are domain II. Positions 113–213 (EHPHYSPVSQ…HDPDRNGSLN (101 aa)) are disordered. Over residues 155 to 170 (PQPSQSSQSAQQQPAQ) the composition is skewed to low complexity. The interval 211-427 (SLNPRYTFDT…GAFIRVSAYA (217 aa)) is domain III, AAA+ region. Gly255, Gly257, Lys258, and Thr259 together coordinate ATP. The domain IV, binds dsDNA stretch occupies residues 428 to 552 (SLNEAPINMA…TQQIKSSDRA (125 aa)).

The protein belongs to the DnaA family. Oligomerizes as a right-handed, spiral filament on DNA at oriC.

The protein localises to the cytoplasm. Plays an essential role in the initiation and regulation of chromosomal replication. ATP-DnaA binds to the origin of replication (oriC) to initiate formation of the DNA replication initiation complex once per cell cycle. Binds the DnaA box (a 9 base pair repeat at the origin) and separates the double-stranded (ds)DNA. Forms a right-handed helical filament on oriC DNA; dsDNA binds to the exterior of the filament while single-stranded (ss)DNA is stabiized in the filament's interior. The ATP-DnaA-oriC complex binds and stabilizes one strand of the AT-rich DNA unwinding element (DUE), permitting loading of DNA polymerase. After initiation quickly degrades to an ADP-DnaA complex that is not apt for DNA replication. Binds acidic phospholipids. The protein is Chromosomal replication initiator protein DnaA of Corynebacterium diphtheriae (strain ATCC 700971 / NCTC 13129 / Biotype gravis).